A 1066-amino-acid chain; its full sequence is Elongation factor 3 (1066 aa).

6 HEAT repeats span residues 112-149 (FIFE…VMSP), 151-188 (AAQQ…ACPE), 192-229 (ALMP…LISN), 231-268 (DIER…EVDS), 269-306 (ATLA…LVDN), and 312-353 (PFLG…VTGD). Position 418 (Thr418) interacts with ADP. ABC transporter domains follow at residues 454–672 (EEGE…YAEL) and 699–1015 (IKMK…KKEE). Residues Asn735, Glu944, Asn947, and His973 each contribute to the ADP site. Residues 997 to 1066 (GHDWTESNSK…YDSADELEDL (70 aa)) are disordered. Over residues 1042–1054 (RKAKKDRMARKKA) the composition is skewed to basic residues.

Belongs to the ABC transporter superfamily. ABCF family. EF3 subfamily.

It is found in the cytoplasm. Its subcellular location is the cytosol. It catalyses the reaction ATP + H2O = ADP + phosphate + H(+). It functions in the pathway protein biosynthesis; polypeptide chain elongation. Ribosome-dependent ATPase that functions in cytoplasmic translation elongation. Required for the ATP-dependent release of deacylated tRNA from the ribosomal E-site during protein biosynthesis. Stimulates the eEF1A-dependent binding of aminoacyl-tRNA to the ribosomal A-site, which has reduced affinity for tRNA as long as the E-site is occupied. Assists translation termination by stimulating the release of nascent protein from the ribosome by release factors. This is Elongation factor 3 from Mycosarcoma maydis (Corn smut fungus).